A 463-amino-acid chain; its full sequence is Sporulation-specific protein 22 (463 aa).

The signal sequence occupies residues 1–25 (MNRITRKSCLFAIIFASLFVTHALG). LRR repeat units follow at residues 127 to 147 (SPELIRIQAGNLNKIEGLFQL), 185 to 206 (IEIIKDIVISDTSLANIENFNK), 207 to 233 (VQEIDTFNINNNRFLETIHSNVKTIRG), 251 to 275 (LREVENITIRDTSLVYLPQLTKVKS), and 302 to 325 (INNVNLIKVNLENLTDIQGGLMIA). N-linked (GlcNAc...) asparagine glycosylation is found at Asn-256, Asn-314, and Asn-327. Residue Asn-440 is the site of GPI-anchor amidated asparagine attachment. Positions 441 to 463 (SANPSMQLDPLLFGTCLVAMLLF) are cleaved as a propeptide — removed in mature form.

It belongs to the SPS2 family.

It localises to the cell membrane. Its function is as follows. Redundant with SPS2 for the organization of the beta-glucan layer of the spore wall. The polypeptide is Sporulation-specific protein 22 (SPS22) (Saccharomyces cerevisiae (strain ATCC 204508 / S288c) (Baker's yeast)).